A 99-amino-acid polypeptide reads, in one-letter code: Keratinocyte differentiation-associated protein (99 aa).

The signal sequence occupies residues 1–22 (MKIPVLPAVVLLSLLALHSAQG).

Highly expressed in skin, but not detectable in any other tissue examined. Expression restricted to cornified/stratified epithelia and not detected in non-cornified/stratified epithelia.

The protein resides in the secreted. Functionally, may act as a soluble regulator of keratinocyte differentiation. May play an important role in embryonic skin morphogenesis. The polypeptide is Keratinocyte differentiation-associated protein (Canis lupus familiaris (Dog)).